We begin with the raw amino-acid sequence, 610 residues long: Mitochondrial import receptor subunit TOM70 (610 aa).

Position 2 is an N-acetylalanine (Ala-2). Residues 2–41 are Mitochondrial intermembrane-facing; the sequence is AASKPVEAAMAAAAAPASGNGVGSSGGTAAPGSGAGTLPR. A helical membrane pass occupies residues 42-62; it reads WHVALAIGAPLLLGAGAMYLW. The Cytoplasmic segment spans residues 63–610; it reads SRRRRRREAG…KKYGLKPPTL (548 aa). The segment at 69–109 is disordered; that stretch reads REAGGRGDASGLKRNSERKTPEGRASPALGSGPDGSGDSLE. Arg-74 carries the post-translational modification Omega-N-methylarginine. Over residues 93–108 the composition is skewed to low complexity; the sequence is ASPALGSGPDGSGDSL. 5 positions are modified to phosphoserine: Ser-94, Ser-99, Ser-104, Ser-107, and Ser-112. TPR repeat units follow at residues 116-149 and 155-188; these read AQAAKNKGNKYFKAGKYEQAIQCYTEAISLCPTE and STFYQNRAAAFEQLQKWKEVAQDCTKAVELNPKY. Lys-187 carries the N6-acetyllysine modification. Residue Lys-277 forms a Glycyl lysine isopeptide (Lys-Gly) (interchain with G-Cter in SUMO2) linkage. TPR repeat units lie at residues 296 to 329, 331 to 364, 369 to 402, 403 to 436, 444 to 477, 478 to 511, 513 to 546, and 547 to 580; these read ENSGYLKAKQYMEEENYDKIISECSKEIDAQGKY, AEALLLRATFYLLIGSANAAKPDLDKVISLKEAN, ANALIKRGTMCMQQQQPMLSTQDFNMAAEIDPMN, SDVYHHRGQLKILLDLVEEAVADFDACIRLRPKF, CFALYRQAYTANNSSQVQAAMKGFEEVIKKFPRC, AEGYALYAQALTDQQQFGKADEMYDKCIDLEPDN, TTYVHKGLLQLQWKQDLDKGLELISKAIEIDNKC, and DFAYETMGTIEVQRGNMEKAIDMFNKAINLAKSE.

Belongs to the Tom70 family. As to quaternary structure, forms part of the preprotein translocase complex of the outer mitochondrial membrane (TOM complex) which consists of at least 7 different proteins (TOMM5, TOMM6, TOMM7, TOMM20, TOMM22, TOMM40 and TOMM70). Interacts with CAPN8. Interacts with TRADD, TRAF6 and STING. Interacts with MAVS. Interacts with HSPA8 and HSP90AA1; both interactions are required for preprotein mitochondrial import. The interaction with HSP90AA1 is direct and mediates the association of TOMM70 with IRF3 and TBK1. Upon mitochondrial depolarization, interacts with PINK1; the interaction is required for PINK1-TOM-TIM23 supercomplex formation which is critical for PINK1 stabilization at the outer mitochondrial membrane, kinase activation and downstream mitophagy.

The protein resides in the mitochondrion outer membrane. Functionally, acts as a receptor of the preprotein translocase complex of the outer mitochondrial membrane (TOM complex). Recognizes and mediates the translocation of mitochondrial preproteins from the cytosol into the mitochondria in a chaperone dependent manner. Mediates TBK1 and IRF3 activation induced by MAVS in response to Sendai virus infection and promotes host antiviral responses during virus infection. This chain is Mitochondrial import receptor subunit TOM70, found in Rattus norvegicus (Rat).